Here is a 316-residue protein sequence, read N- to C-terminus: Acetaldehyde dehydrogenase (316 aa).

11–14 is an NAD(+) binding site; that stretch reads SGNI. Cys131 serves as the catalytic Acyl-thioester intermediate. NAD(+) contacts are provided by residues 162 to 170 and Asn289; that span reads SAGPGTRAN.

The protein belongs to the acetaldehyde dehydrogenase family. Interacts with MhpE.

The catalysed reaction is acetaldehyde + NAD(+) + CoA = acetyl-CoA + NADH + H(+). Its pathway is aromatic compound metabolism; 3-phenylpropanoate degradation. Its function is as follows. Catalyzes the conversion of acetaldehyde to acetyl-CoA, using NAD(+) and coenzyme A. Is the final enzyme in the meta-cleavage pathway for the degradation of aromatic compounds. The chain is Acetaldehyde dehydrogenase from Escherichia coli O7:K1 (strain IAI39 / ExPEC).